The following is a 185-amino-acid chain: FK506-binding protein 2 (185 aa).

Positions 1–20 are cleaved as a signal peptide; sequence MQGLLLSLSLLASAAVGVLA. Residues 41-129 enclose the PPIase FKBP-type domain; it reads GDKINVHYKG…VFETELVGIE (89 aa). A Prevents secretion from ER motif is present at residues 182 to 185; that stretch reads HNEL.

It belongs to the FKBP-type PPIase family. FKBP2 subfamily.

The protein localises to the endoplasmic reticulum. It catalyses the reaction [protein]-peptidylproline (omega=180) = [protein]-peptidylproline (omega=0). With respect to regulation, inhibited by both FK506 and rapamycin. PPIases accelerate the folding of proteins. It catalyzes the cis-trans isomerization of proline imidic peptide bonds in oligopeptides. This is FK506-binding protein 2 (FPR2) from Podospora anserina (Pleurage anserina).